The sequence spans 634 residues: BTB/POZ domain-containing protein At1g03010 (634 aa).

In terms of domain architecture, BTB spans 38-103 (SDLTVQVGSS…CYGINIEINL (66 aa)). The NPH3 domain maps to 205–503 (DWWGKSLAVL…VQVLYFEQIR (299 aa)). Y444 is subject to Phosphotyrosine. Residues 542–580 (RDNYASVRRENRELKLEVARMRMRLTDLEKDHISIKQEL) adopt a coiled-coil conformation.

This sequence belongs to the NPH3 family.

It functions in the pathway protein modification; protein ubiquitination. Functionally, may act as a substrate-specific adapter of an E3 ubiquitin-protein ligase complex (CUL3-RBX1-BTB) which mediates the ubiquitination and subsequent proteasomal degradation of target proteins. The chain is BTB/POZ domain-containing protein At1g03010 from Arabidopsis thaliana (Mouse-ear cress).